A 231-amino-acid chain; its full sequence is Probable septum site-determining protein MinC (231 aa).

Positions 100-125 are disordered; sequence EGKEKSPRPAPAPQAPAQNTTPVTKT.

This sequence belongs to the MinC family. Interacts with MinD and FtsZ.

In terms of biological role, cell division inhibitor that blocks the formation of polar Z ring septums. Rapidly oscillates between the poles of the cell to destabilize FtsZ filaments that have formed before they mature into polar Z rings. Prevents FtsZ polymerization. In Escherichia coli O81 (strain ED1a), this protein is Probable septum site-determining protein MinC.